The sequence spans 184 residues: ATP synthase subunit b, chloroplastic (184 aa).

A helical membrane pass occupies residues 27-49 (LATNPINLSVVFGVLIFFGKGVL).

Belongs to the ATPase B chain family. As to quaternary structure, F-type ATPases have 2 components, F(1) - the catalytic core - and F(0) - the membrane proton channel. F(1) has five subunits: alpha(3), beta(3), gamma(1), delta(1), epsilon(1). F(0) has four main subunits: a(1), b(1), b'(1) and c(10-14). The alpha and beta chains form an alternating ring which encloses part of the gamma chain. F(1) is attached to F(0) by a central stalk formed by the gamma and epsilon chains, while a peripheral stalk is formed by the delta, b and b' chains.

It localises to the plastid. Its subcellular location is the chloroplast thylakoid membrane. F(1)F(0) ATP synthase produces ATP from ADP in the presence of a proton or sodium gradient. F-type ATPases consist of two structural domains, F(1) containing the extramembraneous catalytic core and F(0) containing the membrane proton channel, linked together by a central stalk and a peripheral stalk. During catalysis, ATP synthesis in the catalytic domain of F(1) is coupled via a rotary mechanism of the central stalk subunits to proton translocation. Functionally, component of the F(0) channel, it forms part of the peripheral stalk, linking F(1) to F(0). This is ATP synthase subunit b, chloroplastic from Arabis hirsuta (Hairy rock-cress).